The sequence spans 482 residues: G-protein coupled receptor 37-like 1 (482 aa).

Positions 1-25 (MRWLWPLGVSLAVALAAGPERAPRG) are cleaved as a signal peptide. 2 disordered regions span residues 25-56 (GVWL…AKGL) and 78-119 (PTQP…VQNP). Over 26–134 (VWLQQGGHQP…ERSYGAYAVL (109 aa)) the chain is Extracellular. Residues 40-54 (QPDRSRRGAEREDAK) are compositionally biased toward basic and acidic residues. Asn105 is a glycosylation site (N-linked (GlcNAc...) asparagine). A helical transmembrane segment spans residues 135–155 (LLALLLFAVGIVGSLAVMCIV). Residues 156-167 (WHSYYLKSAWNS) are Cytoplasmic-facing. A helical membrane pass occupies residues 168–188 (VLASLALWDFLVLFFCLPVVT). The Extracellular segment spans residues 189 to 205 (FHEITKQRLLGAVSCRA). Cys203 and Cys286 form a disulfide bridge. A helical membrane pass occupies residues 206–226 (VPFVEVSSLGVTTFSLCALGI). Residues 227–251 (DRFHVATSTLPKARPIEPCPSILAK) lie on the Cytoplasmic side of the membrane. Residues 252-272 (LAVIWVGSMTLAAPELLLWQL) form a helical membrane-spanning segment. At 273–310 (VREPSPAAGTVDTCIMKPSAHLPESLYSLVLTYQNARM) the chain is on the extracellular side. The chain crosses the membrane as a helical span at residues 311-331 (WWSFGCYFCLPVLFTVTCQLV). Topologically, residues 332–361 (TWRVRGTPGRKPESRPGPQEPRGARPSSTV) are cytoplasmic. The tract at residues 338–358 (TPGRKPESRPGPQEPRGARPS) is disordered. The helical transmembrane segment at 362-382 (AGLAAVHALCALPENVCNVVA) threads the bilayer. The Extracellular portion of the chain corresponds to 383 to 398 (AYLSAALTRQTLELLG). Residues 399-419 (LVTQFSTFFKAALTPLLLLCV) form a helical membrane-spanning segment. The Cytoplasmic portion of the chain corresponds to 420 to 482 (SRPLGRAFLD…PPLLALGTPC (63 aa)). Position 480 is a phosphothreonine (Thr480).

The protein belongs to the G-protein coupled receptor 1 family. Interacts with the PTCH1 receptor. Post-translationally, undergoes metalloprotease-mediated cleavage which reduces its constitutive activity. Ubiquitinated.

The protein localises to the cell membrane. The protein resides in the cell projection. It is found in the cilium membrane. Functionally, G-protein coupled receptor. Has been shown to bind the neuroprotective and glioprotective factor prosaposin (PSAP), leading to endocytosis followed by an ERK phosphorylation cascade. However, other studies have shown that prosaposin does not increase activity. It has been suggested that GPR37L1 is a constitutively active receptor which signals through the guanine nucleotide-binding protein G(s) subunit alpha. Participates in the regulation of postnatal cerebellar development by modulating the Shh pathway. Regulates baseline blood pressure in females and protects against cardiovascular stress in males. Mediates inhibition of astrocyte glutamate transporters and reduction in neuronal N-methyl-D-aspartate receptor activity. This chain is G-protein coupled receptor 37-like 1 (GPR37L1), found in Bos taurus (Bovine).